Here is a 506-residue protein sequence, read N- to C-terminus: DEAD-box ATP-dependent RNA helicase CshA (506 aa).

Residues 2–30 (QNFKELGISDNTVQSLESMGFKEPTPIQK) carry the Q motif motif. Residues 33–203 (IPYALQGIDI…QQFMKSPKII (171 aa)) form the Helicase ATP-binding domain. ATP is bound at residue 46–53 (AQTGTGKT). Residues 150–153 (DEAD) carry the DEAD box motif. A Helicase C-terminal domain is found at 214-375 (QIEEFYTIVK…LRPPHRKEVL (162 aa)). The segment at 436 to 506 (EKPLSRKGRN…KGRTFADHQK (71 aa)) is disordered. Residues 468 to 480 (KRSKGYSSKKKST) show a composition bias toward basic residues.

This sequence belongs to the DEAD box helicase family. CshA subfamily. Oligomerizes, may be a member of the RNA degradosome.

The protein resides in the cytoplasm. It catalyses the reaction ATP + H2O = ADP + phosphate + H(+). DEAD-box RNA helicase possibly involved in RNA degradation. Unwinds dsRNA in both 5'- and 3'-directions, has RNA-dependent ATPase activity. The chain is DEAD-box ATP-dependent RNA helicase CshA from Staphylococcus aureus (strain MW2).